Reading from the N-terminus, the 152-residue chain is Small ribosomal subunit protein uS11A (152 aa).

The segment at 131-152 (EDVTPIPSDSTRRKGGRRGRRL) is disordered. Residues 143–152 (RKGGRRGRRL) are compositionally biased toward basic residues.

Belongs to the universal ribosomal protein uS11 family.

The polypeptide is Small ribosomal subunit protein uS11A (Anopheles gambiae (African malaria mosquito)).